Reading from the N-terminus, the 289-residue chain is Probable porphobilinogen deaminase (289 aa).

Position 234 is an S-(dipyrrolylmethanemethyl)cysteine (cysteine 234).

This sequence belongs to the HMBS family. Dipyrromethane serves as cofactor.

It carries out the reaction 4 porphobilinogen + H2O = hydroxymethylbilane + 4 NH4(+). Its pathway is porphyrin-containing compound metabolism; protoporphyrin-IX biosynthesis; coproporphyrinogen-III from 5-aminolevulinate: step 2/4. Its function is as follows. Tetrapolymerization of the monopyrrole PBG into the hydroxymethylbilane pre-uroporphyrinogen in several discrete steps. This Archaeoglobus fulgidus (strain ATCC 49558 / DSM 4304 / JCM 9628 / NBRC 100126 / VC-16) protein is Probable porphobilinogen deaminase (hemC).